The primary structure comprises 309 residues: Homoserine O-succinyltransferase (309 aa).

The active-site Acyl-thioester intermediate is C142. Substrate contacts are provided by K163 and S192. H235 functions as the Proton acceptor in the catalytic mechanism. Residue E237 is part of the active site. R249 lines the substrate pocket.

It belongs to the MetA family.

It is found in the cytoplasm. It catalyses the reaction L-homoserine + succinyl-CoA = O-succinyl-L-homoserine + CoA. It participates in amino-acid biosynthesis; L-methionine biosynthesis via de novo pathway; O-succinyl-L-homoserine from L-homoserine: step 1/1. Its function is as follows. Transfers a succinyl group from succinyl-CoA to L-homoserine, forming succinyl-L-homoserine. This chain is Homoserine O-succinyltransferase, found in Enterobacter sp. (strain 638).